The primary structure comprises 447 residues: Protein O-GlcNAcase (447 aa).

Residues 1-277 (MLTGVIEGFY…TTGAYLADPD (277 aa)) enclose the GH84 domain. Residues G8, K39, and D115 each contribute to the a protein site. Residue D116 is the Proton donor of the active site. Residues Y160, 219-221 (WDN), D226, and N254 each bind a protein.

It belongs to the glycosyl hydrolase 84 family.

The enzyme catalyses 3-O-(N-acetyl-beta-D-glucosaminyl)-L-seryl-[protein] + H2O = N-acetyl-D-glucosamine + L-seryl-[protein]. It catalyses the reaction 3-O-(N-acetyl-beta-D-glucosaminyl)-L-threonyl-[protein] + H2O = L-threonyl-[protein] + N-acetyl-D-glucosamine. With respect to regulation, inhibited by PUGNac (O-(2-acetamido-2-deoxy-D-glucopyranosylidene)amino-N-phenylcarbamate). Its function is as follows. Cleaves GlcNAc from O-glycosylated proteins. Can use p-nitrophenyl-beta-GlcNAc and 4-methylumbelliferone-GlcNAc as substrate (in vitro). In Oceanicola granulosus (strain ATCC BAA-861 / DSM 15982 / KCTC 12143 / HTCC2516), this protein is Protein O-GlcNAcase.